Here is a 133-residue protein sequence, read N- to C-terminus: uncharacterized protein (133 aa).

The next 4 helical transmembrane spans lie at Lys-5–Ile-27, Ile-42–Tyr-64, Ala-77–Ser-99, and Leu-103–Lys-125.

Its subcellular location is the cell membrane. This is an uncharacterized protein from Bacillus subtilis (strain 168).